Consider the following 337-residue polypeptide: Mating-type protein MAT-2 (337 aa).

The segment at residues A125–K193 is a DNA-binding region (HMG box). The disordered stretch occupies residues K171 to A219. Basic residues predominate over residues G200 to R212.

It is found in the nucleus. The sequence is that of Mating-type protein MAT-2 (MAT2) from Cochliobolus sativus (Common root rot and spot blotch fungus).